We begin with the raw amino-acid sequence, 289 residues long: Xyloglucan endotransglucosylase/hydrolase protein 15 (289 aa).

The first 25 residues, 1–25, serve as a signal peptide directing secretion; that stretch reads MGPSSSLTTIVATVLLVTLFGSAYA. One can recognise a GH16 domain in the interval 26 to 216; it reads SNFFDEFDLT…WSKAPFTAYY (191 aa). Glu-102 functions as the Nucleophile in the catalytic mechanism. The active-site Proton donor is Glu-106. Residue Glu-106 coordinates xyloglucan. N-linked (GlcNAc...) asparagine glycosylation occurs at Asn-110. Xyloglucan contacts are provided by residues 119-121, 129-131, 195-196, and Gly-200; these read HTN, DRE, and DW. 2 disulfide bridges follow: Cys-224–Cys-230 and Cys-270–Cys-284. Arg-275 lines the xyloglucan pocket.

It belongs to the glycosyl hydrolase 16 family. XTH group 2 subfamily. Post-translationally, contains at least one intrachain disulfide bond essential for its enzymatic activity. As to expression, strongly expressed in roots, hypocotyls and cotyledons. Aslo detected in inflorescence stems and in the carpels and styles in flowers.

It localises to the secreted. The protein resides in the cell wall. It is found in the extracellular space. The protein localises to the apoplast. It catalyses the reaction breaks a beta-(1-&gt;4) bond in the backbone of a xyloglucan and transfers the xyloglucanyl segment on to O-4 of the non-reducing terminal glucose residue of an acceptor, which can be a xyloglucan or an oligosaccharide of xyloglucan.. The enzyme catalyses xyloglucan + H2O = xyloglucan oligosaccharides.. In terms of biological role, catalyzes xyloglucan endohydrolysis (XEH) and/or endotransglycosylation (XET). Cleaves and religates xyloglucan polymers, an essential constituent of the primary cell wall, and thereby participates in cell wall construction of growing tissues. Has a high XET activity, but little or no XEH activity in vitro. Acceptor preferences are XXXGol &gt; XLLGol = XLFGol &gt; XXLGol &gt; XXFGol. This is Xyloglucan endotransglucosylase/hydrolase protein 15 from Arabidopsis thaliana (Mouse-ear cress).